Reading from the N-terminus, the 706-residue chain is GDNF-inducible zinc finger protein 1 (706 aa).

One can recognise a BTB domain in the interval C31–E103. Residues V149 to A165 show a composition bias toward polar residues. 2 disordered regions span residues V149–R220 and R242–E308. Composition is skewed to basic and acidic residues over residues P197–A212 and R242–A277. 10 consecutive C2H2-type zinc fingers follow at residues F315–H337, Y346–H369, F375–H398, H405–H427, Y433–H455, F461–H483, F489–H511, F517–H539, Y545–H567, and Y573–H595. S611 is subject to Phosphoserine.

The protein belongs to the krueppel C2H2-type zinc-finger protein family. In terms of assembly, interacts with NCL. In terms of tissue distribution, expressed in several tissues, with highest levels in liver. Also expressed in embryos from 7 to 17 dpc.

The protein resides in the nucleus. It localises to the cytoplasm. Its subcellular location is the nucleolus. In terms of biological role, transcriptional repressor that binds the GZF1 responsive element (GRE) (consensus: 5'-TGCGCN[TG][CA]TATA-3'). May be regulating VSX2/HOX10 expression. In Mus musculus (Mouse), this protein is GDNF-inducible zinc finger protein 1.